The primary structure comprises 290 residues: 4-hydroxy-tetrahydrodipicolinate synthase (290 aa).

A pyruvate-binding site is contributed by Thr-44. Catalysis depends on Tyr-132, which acts as the Proton donor/acceptor. Lys-160 serves as the catalytic Schiff-base intermediate with substrate. Ile-202 provides a ligand contact to pyruvate.

This sequence belongs to the DapA family. In terms of assembly, homotetramer; dimer of dimers.

The protein localises to the cytoplasm. The enzyme catalyses L-aspartate 4-semialdehyde + pyruvate = (2S,4S)-4-hydroxy-2,3,4,5-tetrahydrodipicolinate + H2O + H(+). It functions in the pathway amino-acid biosynthesis; L-lysine biosynthesis via DAP pathway; (S)-tetrahydrodipicolinate from L-aspartate: step 3/4. Catalyzes the condensation of (S)-aspartate-beta-semialdehyde [(S)-ASA] and pyruvate to 4-hydroxy-tetrahydrodipicolinate (HTPA). The protein is 4-hydroxy-tetrahydrodipicolinate synthase of Geobacter sp. (strain M21).